The sequence spans 556 residues: Formate--tetrahydrofolate ligase (556 aa).

ATP is bound at residue 65-72; it reads TPAGEGKS.

Belongs to the formate--tetrahydrofolate ligase family.

It carries out the reaction (6S)-5,6,7,8-tetrahydrofolate + formate + ATP = (6R)-10-formyltetrahydrofolate + ADP + phosphate. It participates in one-carbon metabolism; tetrahydrofolate interconversion. The sequence is that of Formate--tetrahydrofolate ligase from Streptococcus agalactiae serotype III (strain NEM316).